The sequence spans 132 residues: Fluoride-specific ion channel FluC 2 (132 aa).

4 helical membrane passes run 12–32 (LTEL…RWQL), 41–61 (LLVN…PVAP), 65–85 (LLVG…MLAA), and 96–116 (AALG…ALGF). Residues glycine 73 and threonine 76 each contribute to the Na(+) site.

Belongs to the fluoride channel Fluc/FEX (TC 1.A.43) family.

The protein resides in the cell inner membrane. The enzyme catalyses fluoride(in) = fluoride(out). With respect to regulation, na(+) is not transported, but it plays an essential structural role and its presence is essential for fluoride channel function. In terms of biological role, fluoride-specific ion channel. Important for reducing fluoride concentration in the cell, thus reducing its toxicity. In Parasynechococcus marenigrum (strain WH8102), this protein is Fluoride-specific ion channel FluC 2.